A 520-amino-acid polypeptide reads, in one-letter code: UDP-N-acetylmuramoyl-L-alanyl-D-glutamate--2,6-diaminopimelate ligase (520 aa).

UDP-N-acetyl-alpha-D-muramoyl-L-alanyl-D-glutamate is bound at residue L48. 134 to 140 (GTSGKTT) is an ATP binding site. Residues 176 to 177 (TT), S203, and R211 each bind UDP-N-acetyl-alpha-D-muramoyl-L-alanyl-D-glutamate. K243 carries the post-translational modification N6-carboxylysine. Meso-2,6-diaminopimelate contacts are provided by residues R405, 429–432 (DNPR), G483, and E487. The Meso-diaminopimelate recognition motif signature appears at 429–432 (DNPR).

It belongs to the MurCDEF family. MurE subfamily. The cofactor is Mg(2+). Post-translationally, carboxylation is probably crucial for Mg(2+) binding and, consequently, for the gamma-phosphate positioning of ATP.

Its subcellular location is the cytoplasm. The enzyme catalyses UDP-N-acetyl-alpha-D-muramoyl-L-alanyl-D-glutamate + meso-2,6-diaminopimelate + ATP = UDP-N-acetyl-alpha-D-muramoyl-L-alanyl-gamma-D-glutamyl-meso-2,6-diaminopimelate + ADP + phosphate + H(+). The protein operates within cell wall biogenesis; peptidoglycan biosynthesis. Functionally, catalyzes the addition of meso-diaminopimelic acid to the nucleotide precursor UDP-N-acetylmuramoyl-L-alanyl-D-glutamate (UMAG) in the biosynthesis of bacterial cell-wall peptidoglycan. The chain is UDP-N-acetylmuramoyl-L-alanyl-D-glutamate--2,6-diaminopimelate ligase from Mycolicibacterium paratuberculosis (strain ATCC BAA-968 / K-10) (Mycobacterium paratuberculosis).